We begin with the raw amino-acid sequence, 264 residues long: uncharacterized protein (264 aa).

The helical transmembrane segment at 7–27 threads the bilayer; that stretch reads LTLGICLVLLIILIVGYVIMT.

This sequence belongs to the staphylococcal tandem lipoprotein family.

Its subcellular location is the cell membrane. This is an uncharacterized protein from Staphylococcus aureus (strain MRSA252).